We begin with the raw amino-acid sequence, 446 residues long: 3-phosphoshikimate 1-carboxyvinyltransferase (446 aa).

K30, S31, and R35 together coordinate 3-phosphoshikimate. A phosphoenolpyruvate-binding site is contributed by K30. Positions 112 and 140 each coordinate phosphoenolpyruvate. 3-phosphoshikimate-binding residues include S186, S187, Q188, S215, E334, and H361. Q188 provides a ligand contact to phosphoenolpyruvate. E334 (proton acceptor) is an active-site residue. R365, R406, and K431 together coordinate phosphoenolpyruvate.

It belongs to the EPSP synthase family. Monomer.

It localises to the cytoplasm. The enzyme catalyses 3-phosphoshikimate + phosphoenolpyruvate = 5-O-(1-carboxyvinyl)-3-phosphoshikimate + phosphate. It functions in the pathway metabolic intermediate biosynthesis; chorismate biosynthesis; chorismate from D-erythrose 4-phosphate and phosphoenolpyruvate: step 6/7. Catalyzes the transfer of the enolpyruvyl moiety of phosphoenolpyruvate (PEP) to the 5-hydroxyl of shikimate-3-phosphate (S3P) to produce enolpyruvyl shikimate-3-phosphate and inorganic phosphate. The sequence is that of 3-phosphoshikimate 1-carboxyvinyltransferase from Streptomyces avermitilis (strain ATCC 31267 / DSM 46492 / JCM 5070 / NBRC 14893 / NCIMB 12804 / NRRL 8165 / MA-4680).